Here is a 982-residue protein sequence, read N- to C-terminus: ATP-dependent DNA helicase Q5 (982 aa).

A Helicase ATP-binding domain is found at 39–213 (MAVVKGAEDV…FAALHLKQPV (175 aa)). An ATP-binding site is contributed by 52 to 59 (MPTGAGKS). A DEAH box motif is present at residues 157 to 160 (DEAH). The 158-residue stretch at 241–398 (NLRDFCLKAL…NKPSDKATLL (158 aa)) folds into the Helicase C-terminal domain. Zn(2+)-binding residues include Cys412, Cys428, Cys432, and Cys435. Phosphoserine occurs at positions 489 and 492. The segment at 491–621 (GSGDEGRDEA…ASKDGQLYDM (131 aa)) is interaction with POLR2A. At Thr527 the chain carries Phosphothreonine. Residues 653–726 (PKRVGAGFSK…ALGSSVNCGD (74 aa)) form an interaction with RAD51 region. Disordered regions lie at residues 675-797 (GKSH…PGKC) and 812-893 (QTEG…AQEP). A Phosphoserine; by CDK1 modification is found at Ser728.

The protein belongs to the helicase family. RecQ subfamily. As to quaternary structure, monomer. Interacts with TOP2A, TOP3A and TOP3B. Interacts with RNA polymerase II subunit POLR2A. Identified in a complex with the RNA polymerase II core bound to DNA. Interacts with RAD51. Interacts with WRN; this interaction stimulates WRN helicase activity on DNA fork duplexes. Interacts with MUS1; this interaction promotes MUS81-dependent mitotic DNA synthesis. Zn(2+) serves as cofactor. Phosphorylated by CDK1 at Ser-728; this phosphorylation is required for RECQL5-mediated disruption of RAD51 filaments on stalled replication forks.

It is found in the nucleus. The protein localises to the nucleoplasm. It carries out the reaction Couples ATP hydrolysis with the unwinding of duplex DNA by translocating in the 3'-5' direction.. The catalysed reaction is ATP + H2O = ADP + phosphate + H(+). Functionally, DNA helicase that plays an important role in DNA replication, transcription and repair. Binds to the RNA polymerase II subunit POLR2A during transcription elongation and suppresses transcription-associated genomic instability. Also associates with POLR1A and enforces the stability of ribosomal DNA arrays. Plays an important role in mitotic chromosome separation after cross-over events and cell cycle progress. Mechanistically, removes RAD51 filaments protecting stalled replication forks at common fragile sites and stimulates MUS81-EME1 endonuclease leading to mitotic DNA synthesis. Required for efficient DNA repair, including repair of inter-strand cross-links. Stimulates DNA decatenation mediated by TOP2A. Prevents sister chromatid exchange and homologous recombination. The protein is ATP-dependent DNA helicase Q5 (Recql5) of Mus musculus (Mouse).